Consider the following 519-residue polypeptide: Protein tweety homolog 1 (519 aa).

Topologically, residues 1 to 42 (MTFASFLINFYSVIPRLNFKFHWTNDVFNLEWSSEYFQALAL) are extracellular. Residues 43-63 (VACLGAAVSLLLLVTIIIVWI) traverse the membrane as a helical segment. Over 64–82 (CQACHKNETTGKTRRRVRR) the chain is Cytoplasmic. Residues 83–103 (LSTVLFIISVLCFFMLGVCLF) form a helical membrane-spanning segment. The Extracellular segment spans residues 104 to 217 (ANEHVNRGMS…VLSLYESERW (114 aa)). N142, N163, and N176 each carry an N-linked (GlcNAc...) asparagine glycan. The helical transmembrane segment at 218-238 (AFLVILLSITMVVLFTGVVAF) threads the bilayer. Residues 239–245 (CKQSKKG) are Cytoplasmic-facing. The helical transmembrane segment at 246–266 (AVVFSAIGFFIFVVVWLLISI) threads the bilayer. Topologically, residues 267–395 (SLPLTIALAD…GTCNQSVAGM (129 aa)) are extracellular. 4 N-linked (GlcNAc...) asparagine glycosylation sites follow: N328, N341, N348, and N389. A helical transmembrane segment spans residues 396–416 (SIYMLSILLLGVFLFILLIVV). Residues 417-519 (SKTWNLFSRL…YNNYEDRYNM (103 aa)) are Cytoplasmic-facing. The interval 459-485 (YNPRTRDRTEPSTNTTSGTADEPNAPL) is disordered.

This sequence belongs to the tweety family.

The protein localises to the cell membrane. Functionally, probable chloride channel. In Caenorhabditis elegans, this protein is Protein tweety homolog 1 (ttyh-1).